Here is a 214-residue protein sequence, read N- to C-terminus: Melanoregulin (214 aa).

Residues 162 to 172 carry the Cholesterol-binding sequence motif motif; sequence LSERYLLVVDR. Phosphoserine is present on serine 213.

Belongs to the melanoregulin family. Identified in a complex with RILP and DCTN1; interacts directly with RILP, but does not interact directly with DCTN1. Interacts with PRPH2. In terms of processing, palmitoylated. Palmitoylation is required to maintain the protein at the melanosome membrane. Detected in melanocytes. Expressed in retina, in retinal pigment epithelium (at protein level). Widely expressed with higher expression in skin, heart, liver, testis and thymus. Detected in retina, in retinal pigment epithelium cells.

It localises to the apical cell membrane. It is found in the melanosome membrane. The protein resides in the lysosome membrane. The protein localises to the cytoplasmic vesicle membrane. In terms of biological role, probably functions as a cargo-recognition protein that couples cytoplasmic vesicles to the transport machinery. Plays a role in hair pigmentation, a process that involves shedding of melanosome-containing vesicles from melanocytes, followed by phagocytosis of the melanosome-containing vesicles by keratinocytes. Functions on melanosomes as receptor for RILP and the complex formed by RILP and DCTN1, and thereby contributes to retrograde melanosome transport from the cell periphery to the center. Overexpression causes accumulation of late endosomes and/or lysosomes at the microtubule organising center (MTOC) at the center of the cell. Probably binds cholesterol and requires the presence of cholesterol in membranes to function in microtubule-mediated retrograde organelle transport. Binds phosphatidylinositol 3-phosphate, phosphatidylinositol 4-phosphate, phosphatidylinositol 5-phosphate and phosphatidylinositol 3,5-bisphosphate, but not phosphatidylinositol 3,4-bisphosphate or phosphatidylinositol 4,5-bisphosphate. Required for normal phagosome clearing and normal activation of lysosomal enzymes in lysosomes from retinal pigment epithelium cells. Required for normal degradation of the lipofuscin component N-retinylidene-N-retinylethanolamine (A2E) in the eye. May function in membrane fusion and regulate the biogenesis of disk membranes of photoreceptor rod cells. The protein is Melanoregulin (Mreg) of Mus musculus (Mouse).